Here is a 244-residue protein sequence, read N- to C-terminus: tRNA (guanine-N(7)-)-methyltransferase (244 aa).

Residues glutamate 74, glutamate 99, aspartate 126, and aspartate 149 each coordinate S-adenosyl-L-methionine. Aspartate 149 is a catalytic residue. Substrate contacts are provided by residues lysine 153, aspartate 185, and 222 to 225; that span reads TKFE.

Belongs to the class I-like SAM-binding methyltransferase superfamily. TrmB family.

It carries out the reaction guanosine(46) in tRNA + S-adenosyl-L-methionine = N(7)-methylguanosine(46) in tRNA + S-adenosyl-L-homocysteine. Its pathway is tRNA modification; N(7)-methylguanine-tRNA biosynthesis. Its function is as follows. Catalyzes the formation of N(7)-methylguanine at position 46 (m7G46) in tRNA. The protein is tRNA (guanine-N(7)-)-methyltransferase of Colwellia psychrerythraea (strain 34H / ATCC BAA-681) (Vibrio psychroerythus).